The chain runs to 137 residues: Flavodoxin (137 aa).

Residues 2–137 (VEIVYWSGTG…KELGEAAAKA (136 aa)) enclose the Flavodoxin-like domain.

The protein belongs to the flavodoxin family. FMN serves as cofactor.

Its function is as follows. Low-potential electron donor to a number of redox enzymes. The chain is Flavodoxin from Megasphaera elsdenii.